Consider the following 395-residue polypeptide: F-box/LRR-repeat protein 12 (395 aa).

Residues 13–61 (TSIIHLPDDCLSFIFQRLDSVADHDSFGLTCHRWLNIQNISRRSLQFQC) enclose the F-box domain. LRR repeat units follow at residues 75–100 (NPDV…SLSG), 101–126 (CTVL…YLDC), 127–152 (CFGI…SLYR), 154–177 (NISD…NLSY), 178–203 (CPLV…KISN), 226–250 (SCQL…NISG), 252–278 (SCYI…NLRM), 279–304 (CRTV…NLAL), 305–330 (CHEV…HVNR), and 331–356 (CRNL…YMNG).

In Arabidopsis thaliana (Mouse-ear cress), this protein is F-box/LRR-repeat protein 12 (FBL12).